The sequence spans 676 residues: DNA ligase (676 aa).

NAD(+)-binding positions include 35–39 (DAVYD), 84–85 (SL), and E115. K117 (N6-AMP-lysine intermediate) is an active-site residue. Residues R138, E177, K296, and K320 each contribute to the NAD(+) site. Zn(2+) is bound by residues C414, C417, C432, and C437. A BRCT domain is found at 599-676 (NANLKLVGKT…SEAELLKILA (78 aa)).

It belongs to the NAD-dependent DNA ligase family. LigA subfamily. Requires Mg(2+) as cofactor. Mn(2+) serves as cofactor.

The catalysed reaction is NAD(+) + (deoxyribonucleotide)n-3'-hydroxyl + 5'-phospho-(deoxyribonucleotide)m = (deoxyribonucleotide)n+m + AMP + beta-nicotinamide D-nucleotide.. In terms of biological role, DNA ligase that catalyzes the formation of phosphodiester linkages between 5'-phosphoryl and 3'-hydroxyl groups in double-stranded DNA using NAD as a coenzyme and as the energy source for the reaction. It is essential for DNA replication and repair of damaged DNA. This is DNA ligase from Trichormus variabilis (strain ATCC 29413 / PCC 7937) (Anabaena variabilis).